The chain runs to 62 residues: Small ribosomal subunit protein bS21 (62 aa).

The span at 43–52 (VKKKLKSEAA) shows a compositional bias: basic and acidic residues. The interval 43-62 (VKKKLKSEAARKRKAKKKRF) is disordered. Residues 53–62 (RKRKAKKKRF) show a composition bias toward basic residues.

This sequence belongs to the bacterial ribosomal protein bS21 family.

This is Small ribosomal subunit protein bS21 from Levilactobacillus brevis (strain ATCC 367 / BCRC 12310 / CIP 105137 / JCM 1170 / LMG 11437 / NCIMB 947 / NCTC 947) (Lactobacillus brevis).